We begin with the raw amino-acid sequence, 503 residues long: MYRTAASRARALKGVLTRSLRPARYASSSAVAETSSSTPAYLSWLSGGSRAALTSLDMPLQGVSLPPPLADKVEPSKLQITTLPNGLKIASETTPNPAASIGLYVDCGSIYEAPYFHGATHLLERMAFKSTLNRTHFRLVREIEAIGGNTSASASREQMSYTIDALKTYVPEMVEVLIDSVRNPAFLDWEVNEELRKMKVEIAELAKNPMGFLLEAIHSAGYSGPLASPLYAPESALDRLNGELLEEFMTENFTAARMVLAASGVEHEELLKVAEPLTSDLPNVPPQLAPKSQYVGGDFRQHTGGEATHFAVAFEVPGWNNEKEAVTATVLQMLMGGGGSFSAGGPGKGMHSWLYRRVLNEYQEVQSCTAFTSIFNDTGLFGIYGCSSPQFAAKAIELAAKELKDVAGGKVNQAHLDRAKAATKSAVLMNLESRMIAAEDIGRQILTYGERKPVDQFLKSVDQLTLKDIADFTSKVISKPLTMGSFGDVLAVPSYDTISSKFR.

Residues Met1–Pro59 constitute a mitochondrion transit peptide.

This sequence belongs to the peptidase M16 family. Heterodimer of alpha and beta subunits, forming the mitochondrial processing protease (MPP) in which subunit alpha is involved in substrate recognition and binding and subunit beta is the catalytic subunit. Component of the ubiquinol-cytochrome c oxidoreductase (cytochrome b-c1 complex, complex III, CIII), a multisubunit enzyme composed of 10 subunits. The complex is composed of 3 respiratory subunits cytochrome b (MT-CYB), cytochrome c1 (CYC1-1 or CYC1-2) and Rieske protein (UCR1-1 or UCR1-2), 2 core protein subunits MPPalpha1 (or MPPalpha2) and MPPB, and 5 low-molecular weight protein subunits QCR7-1 (or QCR7-2), UCRQ-1 (or UCRQ-2), QCR9, UCRY and probably QCR6-1 (or QCR6-2). The complex exists as an obligatory dimer and forms supercomplexes (SCs) in the inner mitochondrial membrane with NADH-ubiquinone oxidoreductase (complex I, CI), resulting in different assemblies (supercomplexes SCI(1)III(2) and SCI(2)III(4)).

It is found in the mitochondrion matrix. Its subcellular location is the mitochondrion inner membrane. Substrate recognition and binding subunit of the essential mitochondrial processing protease (MPP), which cleaves the mitochondrial sequence off newly imported precursors proteins. Its function is as follows. Component of the ubiquinol-cytochrome c oxidoreductase, a multisubunit transmembrane complex that is part of the mitochondrial electron transport chain which drives oxidative phosphorylation. The respiratory chain contains 3 multisubunit complexes succinate dehydrogenase (complex II, CII), ubiquinol-cytochrome c oxidoreductase (cytochrome b-c1 complex, complex III, CIII) and cytochrome c oxidase (complex IV, CIV), that cooperate to transfer electrons derived from NADH and succinate to molecular oxygen, creating an electrochemical gradient over the inner membrane that drives transmembrane transport and the ATP synthase. The cytochrome b-c1 complex catalyzes electron transfer from ubiquinol to cytochrome c, linking this redox reaction to translocation of protons across the mitochondrial inner membrane, with protons being carried across the membrane as hydrogens on the quinol. In the process called Q cycle, 2 protons are consumed from the matrix, 4 protons are released into the intermembrane space and 2 electrons are passed to cytochrome c. This Arabidopsis thaliana (Mouse-ear cress) protein is Probable mitochondrial-processing peptidase subunit alpha-1, mitochondrial (MPPalpha1).